A 553-amino-acid polypeptide reads, in one-letter code: Thermosome subunit beta (553 aa).

A disordered region spans residues 534–553; that stretch reads KKSEGKTGEKKESEKGKEED.

The protein belongs to the TCP-1 chaperonin family. Forms a Heterooligomeric complex of two stacked eight-membered rings.

Functionally, molecular chaperone; binds unfolded polypeptides in vitro, and has a weak ATPase activity. This is Thermosome subunit beta (thsB) from Sulfolobus acidocaldarius (strain ATCC 33909 / DSM 639 / JCM 8929 / NBRC 15157 / NCIMB 11770).